A 38-amino-acid chain; its full sequence is Large ribosomal subunit protein bL36 (38 aa).

Belongs to the bacterial ribosomal protein bL36 family.

This is Large ribosomal subunit protein bL36 from Paraburkholderia phymatum (strain DSM 17167 / CIP 108236 / LMG 21445 / STM815) (Burkholderia phymatum).